We begin with the raw amino-acid sequence, 288 residues long: Phosphatidylserine decarboxylase proenzyme (288 aa).

Catalysis depends on charge relay system; for autoendoproteolytic cleavage activity residues Asp91, His148, and Ser254. Ser254 functions as the Schiff-base intermediate with substrate; via pyruvic acid; for decarboxylase activity in the catalytic mechanism. Residue Ser254 is modified to Pyruvic acid (Ser); by autocatalysis.

This sequence belongs to the phosphatidylserine decarboxylase family. PSD-B subfamily. Prokaryotic type I sub-subfamily. In terms of assembly, heterodimer of a large membrane-associated beta subunit and a small pyruvoyl-containing alpha subunit. Pyruvate serves as cofactor. Is synthesized initially as an inactive proenzyme. Formation of the active enzyme involves a self-maturation process in which the active site pyruvoyl group is generated from an internal serine residue via an autocatalytic post-translational modification. Two non-identical subunits are generated from the proenzyme in this reaction, and the pyruvate is formed at the N-terminus of the alpha chain, which is derived from the carboxyl end of the proenzyme. The autoendoproteolytic cleavage occurs by a canonical serine protease mechanism, in which the side chain hydroxyl group of the serine supplies its oxygen atom to form the C-terminus of the beta chain, while the remainder of the serine residue undergoes an oxidative deamination to produce ammonia and the pyruvoyl prosthetic group on the alpha chain. During this reaction, the Ser that is part of the protease active site of the proenzyme becomes the pyruvoyl prosthetic group, which constitutes an essential element of the active site of the mature decarboxylase.

The protein localises to the cell membrane. The catalysed reaction is a 1,2-diacyl-sn-glycero-3-phospho-L-serine + H(+) = a 1,2-diacyl-sn-glycero-3-phosphoethanolamine + CO2. Its pathway is phospholipid metabolism; phosphatidylethanolamine biosynthesis; phosphatidylethanolamine from CDP-diacylglycerol: step 2/2. In terms of biological role, catalyzes the formation of phosphatidylethanolamine (PtdEtn) from phosphatidylserine (PtdSer). The polypeptide is Phosphatidylserine decarboxylase proenzyme (Pseudoalteromonas translucida (strain TAC 125)).